The following is a 130-amino-acid chain: Large ribosomal subunit protein bL12 (130 aa).

It belongs to the bacterial ribosomal protein bL12 family. In terms of assembly, homodimer. Part of the ribosomal stalk of the 50S ribosomal subunit. Forms a multimeric L10(L12)X complex, where L10 forms an elongated spine to which 2 to 4 L12 dimers bind in a sequential fashion. Binds GTP-bound translation factors.

In terms of biological role, forms part of the ribosomal stalk which helps the ribosome interact with GTP-bound translation factors. Is thus essential for accurate translation. The sequence is that of Large ribosomal subunit protein bL12 from Synechococcus sp. (strain WH7803).